The following is a 654-amino-acid chain: DNA ligase (654 aa).

Residues 34-38 (DLEYD), 83-84 (SL), and glutamate 114 each bind NAD(+). Residue lysine 116 is the N6-AMP-lysine intermediate of the active site. NAD(+)-binding residues include arginine 137, glutamate 171, lysine 280, and lysine 304. Zn(2+)-binding residues include cysteine 396, cysteine 399, cysteine 414, and cysteine 419. In terms of domain architecture, BRCT spans 577-654 (VISTILSGYT…EEQFYDLIKQ (78 aa)).

This sequence belongs to the NAD-dependent DNA ligase family. LigA subfamily. The cofactor is Mg(2+). Requires Mn(2+) as cofactor.

The enzyme catalyses NAD(+) + (deoxyribonucleotide)n-3'-hydroxyl + 5'-phospho-(deoxyribonucleotide)m = (deoxyribonucleotide)n+m + AMP + beta-nicotinamide D-nucleotide.. Its function is as follows. DNA ligase that catalyzes the formation of phosphodiester linkages between 5'-phosphoryl and 3'-hydroxyl groups in double-stranded DNA using NAD as a coenzyme and as the energy source for the reaction. It is essential for DNA replication and repair of damaged DNA. The polypeptide is DNA ligase (Mycoplasmopsis agalactiae (strain NCTC 10123 / CIP 59.7 / PG2) (Mycoplasma agalactiae)).